The chain runs to 412 residues: Peptidase T (412 aa).

Histidine 84 contacts Zn(2+). Aspartate 86 is a catalytic residue. Aspartate 146 provides a ligand contact to Zn(2+). The Proton acceptor role is filled by glutamate 179. Zn(2+) is bound by residues glutamate 180, aspartate 202, and histidine 385.

The protein belongs to the peptidase M20B family. The cofactor is Zn(2+).

It localises to the cytoplasm. The enzyme catalyses Release of the N-terminal residue from a tripeptide.. Cleaves the N-terminal amino acid of tripeptides. This chain is Peptidase T, found in Haemophilus influenzae (strain 86-028NP).